Consider the following 138-residue polypeptide: MTKAIQKIGSRRNGRIASRKNGRRIPKGVIHVQASFNNTIVTVTDVRGQVVSWSSAGTCGFRGTRRGTPFAAQTAAANAIRTVVDQGMQRAEVMIKGPGLGRDAALRAIRRSGILLSFVRDVTPMPHNGCRPPKKRRV.

The segment at 1–21 (MTKAIQKIGSRRNGRIASRKN) is disordered. Residues 9–21 (GSRRNGRIASRKN) are compositionally biased toward basic residues.

Belongs to the universal ribosomal protein uS11 family. In terms of assembly, part of the 30S ribosomal subunit.

The protein resides in the plastid. It is found in the chloroplast. In Ceratophyllum demersum (Rigid hornwort), this protein is Small ribosomal subunit protein uS11c.